Consider the following 327-residue polypeptide: uncharacterized protein (327 aa).

A disordered region spans residues 12–31 (PLGTTKSYHMNTSTVSPPSP). 2 helical membrane passes run 183-203 (VSSP…PVIL) and 292-312 (VGVG…GLLM).

The protein resides in the membrane. This is an uncharacterized protein from Arabidopsis thaliana (Mouse-ear cress).